A 428-amino-acid polypeptide reads, in one-letter code: ATP-dependent RNA helicase RhlB (428 aa).

The short motif at 9–37 (QKFSDFALHPLVVEALENKGFQYCTPIQA) is the Q motif element. A Helicase ATP-binding domain is found at 40–219 (LPLTLSGRDV…FEQMNNAEYV (180 aa)). 53 to 60 (AQTGTGKT) is an ATP binding site. The short motif at 165–168 (DEAD) is the DEAD box element. One can recognise a Helicase C-terminal domain in the interval 245 to 390 (RLLQTLIEEE…VSKYNSDALL (146 aa)). A disordered region spans residues 394–428 (PAPKRLARTRTGNGPRRNSAPRRSGAPRNNRKRPG).

This sequence belongs to the DEAD box helicase family. RhlB subfamily. In terms of assembly, component of the RNA degradosome, which is a multiprotein complex involved in RNA processing and mRNA degradation.

It localises to the cytoplasm. The catalysed reaction is ATP + H2O = ADP + phosphate + H(+). Its function is as follows. DEAD-box RNA helicase involved in RNA degradation. Has RNA-dependent ATPase activity and unwinds double-stranded RNA. The sequence is that of ATP-dependent RNA helicase RhlB from Yersinia pseudotuberculosis serotype O:1b (strain IP 31758).